Here is a 55-residue protein sequence, read N- to C-terminus: Trypsin inhibitor ClTI-1 (55 aa).

The region spanning 1–55 (SIPPACDKYSRLPGCPRDYSPVCGTDGKTYPNECVLCLSNSEENKNVQIYKSGMC) is the Kazal-like domain. Intrachain disulfides connect C6/C37, C15/C34, and C23/C55.

It localises to the secreted. Inhibits trypsin and plasmin. This Gallus gallus (Chicken) protein is Trypsin inhibitor ClTI-1.